The primary structure comprises 538 residues: Poly [ADP-ribose] polymerase 2 (538 aa).

Residues 1–94 (MSIINDENGR…RDDEPVPNKY (94 aa)) form the WGR domain. The segment at 104–133 (RQTEKEVKKEEPEPEPKVDEKNTRGRKKRG) is disordered. Basic and acidic residues predominate over residues 105-126 (QTEKEVKKEEPEPEPKVDEKNT). Positions 148–285 (VEEVNEKLKE…GSIEASLELK (138 aa)) constitute a PARP alpha-helical domain. One can recognise a PARP catalytic domain in the interval 309–535 (EPVSEEIAGK…VKVDRLTAKE (227 aa)). The disordered stretch occupies residues 357–381 (QEVPKKRGRKSTKTAAPTVPPPTTK).

It belongs to the ARTD/PARP family.

The protein localises to the nucleus. It catalyses the reaction NAD(+) + (ADP-D-ribosyl)n-acceptor = nicotinamide + (ADP-D-ribosyl)n+1-acceptor + H(+).. The catalysed reaction is L-aspartyl-[protein] + NAD(+) = 4-O-(ADP-D-ribosyl)-L-aspartyl-[protein] + nicotinamide. The enzyme catalyses L-glutamyl-[protein] + NAD(+) = 5-O-(ADP-D-ribosyl)-L-glutamyl-[protein] + nicotinamide. Inhibited by N-(6-oxo-5,6-dihydrophenanthridin-2-yl)-N,N-dimethylacetamide HCl (PJ34), 1,5-dihydroxyisoquinoline (DHQ) and 3-aminobenzamide (3AB). In terms of biological role, poly[ADP-ribose] polymerase modifies various nuclear proteins by poly(ADP-ribosyl)ation, a post-translational modification synthesized after DNA damage that appears as an obligatory step in a detection/signaling pathway leading to the reparation of DNA strand breaks and programmed cell death. The protein is Poly [ADP-ribose] polymerase 2 of Caenorhabditis elegans.